Consider the following 736-residue polypeptide: Catalase-peroxidase (736 aa).

The interval 1–30 is disordered; that stretch reads MGGNVMTDDKMNSVTSGANKQETGRDMSNR. Polar residues predominate over residues 12–21; that stretch reads NSVTSGANKQ. Residues 101 to 224 constitute a cross-link (tryptophyl-tyrosyl-methioninium (Trp-Tyr) (with M-250)); it reads WHSAGTYRAG…LAAVQMGLIY (124 aa). Histidine 102 serves as the catalytic Proton acceptor. The segment at residues 224–250 is a cross-link (tryptophyl-tyrosyl-methioninium (Tyr-Met) (with W-101)); the sequence is YVNPEGPNGNPDPIAAAKDIREVFARM. Histidine 265 is a binding site for heme b. Positions 351-373 are disordered; the sequence is KGGAGAGTIPDAHDPSKRHAPSM.

This sequence belongs to the peroxidase family. Peroxidase/catalase subfamily. Homodimer or homotetramer. Heme b is required as a cofactor. In terms of processing, formation of the three residue Trp-Tyr-Met cross-link is important for the catalase, but not the peroxidase activity of the enzyme.

It catalyses the reaction H2O2 + AH2 = A + 2 H2O. The catalysed reaction is 2 H2O2 = O2 + 2 H2O. Functionally, bifunctional enzyme with both catalase and broad-spectrum peroxidase activity. This is Catalase-peroxidase from Methanosarcina acetivorans (strain ATCC 35395 / DSM 2834 / JCM 12185 / C2A).